A 583-amino-acid polypeptide reads, in one-letter code: Orphan steroid hormone receptor 2 (583 aa).

The segment at residues 84 to 159 (IELCAVCGDK…MGMKSDSVQC (76 aa)) is a DNA-binding region (nuclear receptor). 2 consecutive NR C4-type zinc fingers follow at residues 87–107 (CAVCGDKASGRHYGAISCEGC) and 123–142 (CRGNKDCQIIKHNRNRCQYC). Residues 248–563 (TLASVVTSLA…SIIPYILRME (316 aa)) enclose the NR LBD domain.

Belongs to the nuclear hormone receptor family. NR2 subfamily. As to quaternary structure, binds DNA as a monomer. Expressed uniformly in the early embryo. In contrast, larval expression is localized to the epaulettes and mouth epithelium. Expressed in multiple adult organs including lantern muscle, tubefeet, intestine, coelomocytes and gonads. In the adult ovaries and testes, expression is specifically localized to the smooth muscle epithelial layer of cells which surround the ovarioles and acini, respectively (at protein level).

The protein resides in the cytoplasm. The protein localises to the nucleus. Its function is as follows. Orphan nuclear receptor. Binds to the hormone response element in the upstream promoter region of the CYIIIB gene in vitro. Both isoform 1 and isoform 2 bind DNA. In Strongylocentrotus purpuratus (Purple sea urchin), this protein is Orphan steroid hormone receptor 2.